Reading from the N-terminus, the 291-residue chain is Deaminated glutathione amidase (291 aa).

Residues 13 to 268 (KRIGLGQITS…NDIAFVDIDL (256 aa)) form the CN hydrolase domain. Catalysis depends on Glu-52, which acts as the Proton acceptor. Lys-130 serves as the catalytic Proton donor. The active-site Nucleophile is Cys-172.

This sequence belongs to the carbon-nitrogen hydrolase superfamily. NIT1/NIT2 family.

The enzyme catalyses N-(4-oxoglutaryl)-L-cysteinylglycine + H2O = L-cysteinylglycine + 2-oxoglutarate. Its function is as follows. Catalyzes the hydrolysis of the amide bond in N-(4-oxoglutarate)-L-cysteinylglycine (deaminated glutathione), a metabolite repair reaction to dispose of the harmful deaminated glutathione. The protein is Deaminated glutathione amidase (nit1-1) of Dictyostelium discoideum (Social amoeba).